The chain runs to 104 residues: Small ribosomal subunit protein uS10 (104 aa).

Belongs to the universal ribosomal protein uS10 family. In terms of assembly, part of the 30S ribosomal subunit.

Its function is as follows. Involved in the binding of tRNA to the ribosomes. The polypeptide is Small ribosomal subunit protein uS10 (Albidiferax ferrireducens (strain ATCC BAA-621 / DSM 15236 / T118) (Rhodoferax ferrireducens)).